The following is a 283-amino-acid chain: GTPase Era (283 aa).

The Era-type G domain occupies 7-175; it reads YCGHVIIVGK…KNIIKSYLPE (169 aa). Residues 15 to 22 form a G1 region; it reads GKANVGKS. 15 to 22 is a GTP binding site; sequence GKANVGKS. The interval 41–45 is G2; sequence NTTQS. Residues 62 to 65 are G3; sequence DTPG. GTP is bound by residues 62–66 and 124–127; these read DTPGV and NKID. The interval 124-127 is G4; sequence NKID. The tract at residues 154 to 156 is G5; that stretch reads ISA. The KH type-2 domain occupies 198-283; it reads IREQLILFLG…HLVLWVKDKN (86 aa).

It belongs to the TRAFAC class TrmE-Era-EngA-EngB-Septin-like GTPase superfamily. Era GTPase family. Monomer.

It is found in the cytoplasm. The protein localises to the cell membrane. Functionally, an essential GTPase that binds both GDP and GTP, with rapid nucleotide exchange. Plays a role in 16S rRNA processing and 30S ribosomal subunit biogenesis and possibly also in cell cycle regulation and energy metabolism. The protein is GTPase Era of Buchnera aphidicola subsp. Acyrthosiphon pisum (strain Tuc7).